Consider the following 217-residue polypeptide: Small ribosomal subunit protein uS3 (217 aa).

Residues 38-106 (IRKFVQKELA…QVHINIIEIK (69 aa)) form the KH type-2 domain.

It belongs to the universal ribosomal protein uS3 family. As to quaternary structure, part of the 30S ribosomal subunit. Forms a tight complex with proteins S10 and S14.

Binds the lower part of the 30S subunit head. Binds mRNA in the 70S ribosome, positioning it for translation. The chain is Small ribosomal subunit protein uS3 from Streptococcus gordonii (strain Challis / ATCC 35105 / BCRC 15272 / CH1 / DL1 / V288).